The primary structure comprises 356 residues: Histidinol-phosphate aminotransferase (356 aa).

An N6-(pyridoxal phosphate)lysine modification is found at lysine 213.

This sequence belongs to the class-II pyridoxal-phosphate-dependent aminotransferase family. Histidinol-phosphate aminotransferase subfamily. As to quaternary structure, homodimer. The cofactor is pyridoxal 5'-phosphate.

It catalyses the reaction L-histidinol phosphate + 2-oxoglutarate = 3-(imidazol-4-yl)-2-oxopropyl phosphate + L-glutamate. It participates in amino-acid biosynthesis; L-histidine biosynthesis; L-histidine from 5-phospho-alpha-D-ribose 1-diphosphate: step 7/9. The protein is Histidinol-phosphate aminotransferase of Clostridium novyi (strain NT).